The chain runs to 509 residues: Probable cytochrome P450 4ac1 (509 aa).

Heme contacts are provided by Glu317 and Cys454.

Belongs to the cytochrome P450 family. The cofactor is heme.

It localises to the endoplasmic reticulum membrane. The protein resides in the microsome membrane. May be involved in the metabolism of insect hormones and in the breakdown of synthetic insecticides. In Drosophila melanogaster (Fruit fly), this protein is Probable cytochrome P450 4ac1 (Cyp4ac1).